The primary structure comprises 173 residues: Transcription factor E (173 aa).

The HTH TFE/IIEalpha-type domain occupies 9–92 (NNPATRAYIH…LWQLRIDLLY (84 aa)).

This sequence belongs to the TFE family. Monomer. Interaction with RNA polymerase subunits RpoF and RpoE is necessary for Tfe stimulatory transcription activity. Able to interact with Tbp and RNA polymerase in the absence of DNA promoter. Interacts both with the preinitiation and elongation complexes.

Functionally, transcription factor that plays a role in the activation of archaeal genes transcribed by RNA polymerase. Facilitates transcription initiation by enhancing TATA-box recognition by TATA-box-binding protein (Tbp), and transcription factor B (Tfb) and RNA polymerase recruitment. Not absolutely required for transcription in vitro, but particularly important in cases where Tbp or Tfb function is not optimal. It dynamically alters the nucleic acid-binding properties of RNA polymerases by stabilizing the initiation complex and destabilizing elongation complexes. Seems to translocate with the RNA polymerase following initiation and acts by binding to the non template strand of the transcription bubble in elongation complexes. This chain is Transcription factor E, found in Methanoregula boonei (strain DSM 21154 / JCM 14090 / 6A8).